The sequence spans 196 residues: Probable GTP-binding protein EngB (196 aa).

The EngB-type G domain maps to Asp21–Ser195. Residues Gly29–Ser36, Gly56–Leu60, Asp75–Gly78, Thr142–Asp145, and Ile174–Asn176 contribute to the GTP site. Mg(2+)-binding residues include Ser36 and Thr58.

It belongs to the TRAFAC class TrmE-Era-EngA-EngB-Septin-like GTPase superfamily. EngB GTPase family. Requires Mg(2+) as cofactor.

In terms of biological role, necessary for normal cell division and for the maintenance of normal septation. The protein is Probable GTP-binding protein EngB of Mycoplasma mycoides subsp. mycoides SC (strain CCUG 32753 / NCTC 10114 / PG1).